We begin with the raw amino-acid sequence, 509 residues long: MQYKDLRDFISQLEQLGELRRVSTPVSPNLEMTEICDRLLRAGGPAVLFERPAGFRSPEGTYSVPVLANLFGTTHRVALGMGAQSLEDLRDIGRVLSALKEPEPPRGLREAGKLFTLAKSVWDMAPKRVSSPACQEIVWEGNDVDLARLPIQTCWPGDAAPLITWGLVVTKGPHKKRQNLGIYRQQVISRNQVIMRWLAHRGGALDFREHALANPGKPFPIAVALGADPATILGAVTPVPDTLSEYQFAGLLRGSRTALAGCLTPTLSELSVPASAEIVLEGHIQPDPDHPSGYQHALEGPYGDHTGYYNEQDWFPVFTIDRITMRRDPIYHSTYTGKPPDEPAVLGVALNEVFVPLLQKQFPEITDFYLPPEGCSYRMALVRMKKQYAGHAKRVMFGVWSFLRQFMYTKFIVVVDDDVDVRDWKEVIWAITTRVDPARDTVLVENTPIDYLDFASPVSGLGSKMGIDATDKWPGETTREWGRTISMDPAVKAKVDGMMATLFDRPAGT.

Asparagine 179 is a binding site for Mn(2+). Prenylated FMN-binding positions include 182–184 (IYR), 196–198 (RWL), and 201–202 (RG). Glutamate 245 is a binding site for Mn(2+). The active-site Proton donor is aspartate 304.

This sequence belongs to the UbiD family. In terms of assembly, homohexamer. It depends on prenylated FMN as a cofactor. Mn(2+) is required as a cofactor.

The protein localises to the cell membrane. It catalyses the reaction a 4-hydroxy-3-(all-trans-polyprenyl)benzoate + H(+) = a 2-(all-trans-polyprenyl)phenol + CO2. It participates in cofactor biosynthesis; ubiquinone biosynthesis. Catalyzes the decarboxylation of 3-octaprenyl-4-hydroxy benzoate to 2-octaprenylphenol, an intermediate step in ubiquinone biosynthesis. This chain is 3-octaprenyl-4-hydroxybenzoate carboxy-lyase, found in Cupriavidus pinatubonensis (strain JMP 134 / LMG 1197) (Cupriavidus necator (strain JMP 134)).